The chain runs to 173 residues: MVDSYDDSLDGEKSKSQVKRELHALVDLGERLTTLKPDLLNKLPLTDALRRALADAPKHVAHIARKRHLQFIGKLMRDQDTDAILQLLDQLDASTRQYNERFHNLERWRDRLIGGGDDVLEKFVGEYPDADRQQLRSLIRQAQHELAHNKAPASSRKIFKYIRELDETQRGLR.

It belongs to the DarP family.

The protein localises to the cytoplasm. Its function is as follows. Member of a network of 50S ribosomal subunit biogenesis factors which assembles along the 30S-50S interface, preventing incorrect 23S rRNA structures from forming. Promotes peptidyl transferase center (PTC) maturation. In Pseudomonas fluorescens (strain ATCC BAA-477 / NRRL B-23932 / Pf-5), this protein is Dual-action ribosomal maturation protein DarP.